The primary structure comprises 634 residues: Fluorothreonine transaldolase (634 aa).

3 residues coordinate pyridoxal 5'-phosphate: Tyr-67, His-221, and His-247. The residue at position 248 (Lys-248) is an N6-(pyridoxal phosphate)lysine. A pyridoxal 5'-phosphate-binding site is contributed by Arg-375. Residues 428-456 (TGDPASAAGPPARERYAPPTAPAGHPARP) are disordered.

This sequence belongs to the SHMT family. Requires pyridoxal 5'-phosphate as cofactor.

It carries out the reaction fluoroacetaldehyde + L-threonine = 4-fluoro-L-threonine + acetaldehyde. In terms of biological role, transaldolase that catalyzes the final step in 4-fluorothreonine biosynthesis. Mediates a L-threonine/fluoroaceldehyde to 4-fluoro-L-threonine/acetaldehyde crossover reaction. Can also convert chloroacetaldehyde into 4-chloro-L-threonine. Does not use glycine as a substrate. In Streptantibioticus cattleyicolor (Streptomyces cattleya), this protein is Fluorothreonine transaldolase.